The chain runs to 284 residues: ASC1-like protein 3 (284 aa).

6 consecutive transmembrane segments (helical) span residues 9 to 29 (SSFFPLTLVFSVGFFCARFFL), 69 to 89 (LTYYGSVQAWVLLIIKQEPWS), 108 to 128 (LMLFYMCQCGFYIYSIFALVA), 148 to 168 (ILIGYAYLTGFFRIGTIILAL), 195 to 215 (FGLFALSWLLLRLIYFPFWII), and 243 to 263 (MLLTLLVFHIYWWKLICLMIM). The 208-residue stretch at 60–267 (VKFSESIWKL…ICLMIMKQLN (208 aa)) folds into the TLC domain.

The protein localises to the endoplasmic reticulum membrane. Functionally, mediates resistance to sphinganine-analog mycotoxins (SAMs) by restoring the sphingolipid biosynthesis. Could salvage the transport of GPI-anchored proteins from the endoplasmic reticulum to the Golgi apparatus in ceramides-depleted cells after SAM exposure. The sequence is that of ASC1-like protein 3 from Oryza sativa subsp. japonica (Rice).